Consider the following 443-residue polypeptide: MFLAQEIIRKKRNGLALSTEEIQFFVKGITTNAVSEGQIAALGMAVYFNDMNMDERIALTTAMRDSGTVLNWQSLGLNGPVIDKHSTGGVGDVISLMLGPMAAACGGYVPMISGRGLGHTGGTLDKFDAIPGYQTEPSSELFRKVVKDVGVAIIGQTGDLVPADKRFYSIRDNTATVESISLITASILSKKLACSLDALAMDVKVGSGAFMPTYEASEELARSIAAVANGAGTKTTALLTDMNQVLASCAGNAVEVKEAIDFLTGAYRNPRLYAVTMGLCAEMLLLGGLATDEADARAKLNRVLDNGRAAEIFGKMVSGLGGPVDFVENYSKYLPQSQIIRPVFADTQGYAHSMDTRELGLAVVTLGGGRRKPGDALDYSVGLTQVCALGDKIDASTPIAVIHAQSEDAFAQAEEAVKKAIRIDEVAPEKTPEIYAYIRAADL.

The protein belongs to the thymidine/pyrimidine-nucleoside phosphorylase family. As to quaternary structure, homodimer.

It catalyses the reaction thymidine + phosphate = 2-deoxy-alpha-D-ribose 1-phosphate + thymine. It functions in the pathway pyrimidine metabolism; dTMP biosynthesis via salvage pathway; dTMP from thymine: step 1/2. The enzymes which catalyze the reversible phosphorolysis of pyrimidine nucleosides are involved in the degradation of these compounds and in their utilization as carbon and energy sources, or in the rescue of pyrimidine bases for nucleotide synthesis. This is Thymidine phosphorylase from Shewanella sp. (strain MR-7).